The sequence spans 371 residues: Glutamate 5-kinase (371 aa).

Residue K12 coordinates ATP. Substrate-binding residues include S52, D136, and N148. Residues 168–169 and 210–216 each bind ATP; these read SD and TGGMRTK. The region spanning 275 to 354 is the PUA domain; the sequence is QGEILVDEGA…EDIAEKFGYS (80 aa).

Belongs to the glutamate 5-kinase family.

Its subcellular location is the cytoplasm. The enzyme catalyses L-glutamate + ATP = L-glutamyl 5-phosphate + ADP. The protein operates within amino-acid biosynthesis; L-proline biosynthesis; L-glutamate 5-semialdehyde from L-glutamate: step 1/2. In terms of biological role, catalyzes the transfer of a phosphate group to glutamate to form L-glutamate 5-phosphate. This is Glutamate 5-kinase from Idiomarina loihiensis (strain ATCC BAA-735 / DSM 15497 / L2-TR).